The chain runs to 516 residues: Cytochrome P450 1A2 (516 aa).

A glycan (O-linked (GlcNAc) serine) is linked at serine 69. Phenylalanine 226 is a binding site for substrate. A heme-binding site is contributed by cysteine 458.

This sequence belongs to the cytochrome P450 family. In terms of assembly, interacts with PGRMC1; the interaction requires PGRMC1 homodimerization. It depends on heme as a cofactor.

The protein resides in the endoplasmic reticulum membrane. The protein localises to the microsome membrane. The catalysed reaction is an organic molecule + reduced [NADPH--hemoprotein reductase] + O2 = an alcohol + oxidized [NADPH--hemoprotein reductase] + H2O + H(+). It carries out the reaction 17beta-estradiol + reduced [NADPH--hemoprotein reductase] + O2 = 2-hydroxy-17beta-estradiol + oxidized [NADPH--hemoprotein reductase] + H2O + H(+). It catalyses the reaction 17beta-estradiol + reduced [NADPH--hemoprotein reductase] + O2 = 4-hydroxy-17beta-estradiol + oxidized [NADPH--hemoprotein reductase] + H2O + H(+). The enzyme catalyses estrone + reduced [NADPH--hemoprotein reductase] + O2 = 2-hydroxyestrone + oxidized [NADPH--hemoprotein reductase] + H2O + H(+). The catalysed reaction is estrone + reduced [NADPH--hemoprotein reductase] + O2 = 4-hydroxyestrone + oxidized [NADPH--hemoprotein reductase] + H2O + H(+). It carries out the reaction cholesterol + reduced [NADPH--hemoprotein reductase] + O2 = 25-hydroxycholesterol + oxidized [NADPH--hemoprotein reductase] + H2O + H(+). It catalyses the reaction all-trans-retinol + reduced [NADPH--hemoprotein reductase] + O2 = all-trans-retinal + oxidized [NADPH--hemoprotein reductase] + 2 H2O + H(+). The enzyme catalyses all-trans-retinal + reduced [NADPH--hemoprotein reductase] + O2 = all-trans-retinoate + oxidized [NADPH--hemoprotein reductase] + H2O + 2 H(+). The catalysed reaction is (5Z,8Z,11Z,14Z)-eicosatetraenoate + reduced [NADPH--hemoprotein reductase] + O2 = (14R,15S)-epoxy-(5Z,8Z,11Z)-eicosatrienoate + oxidized [NADPH--hemoprotein reductase] + H2O + H(+). It carries out the reaction (5Z,8Z,11Z,14Z)-eicosatetraenoate + reduced [NADPH--hemoprotein reductase] + O2 = (14S,15R)-epoxy-(5Z,8Z,11Z)-eicosatrienoate + oxidized [NADPH--hemoprotein reductase] + H2O + H(+). It catalyses the reaction (5Z,8Z,11Z,14Z,17Z)-eicosapentaenoate + reduced [NADPH--hemoprotein reductase] + O2 = (17R,18S)-epoxy-(5Z,8Z,11Z,14Z)-eicosatetraenoate + oxidized [NADPH--hemoprotein reductase] + H2O + H(+). The enzyme catalyses (4Z,7Z,10Z,13Z,16Z,19Z)-docosahexaenoate + reduced [NADPH--hemoprotein reductase] + O2 = (19R,20S)-epoxy-(4Z,7Z,10Z,13Z,16Z)-docosapentaenoate + oxidized [NADPH--hemoprotein reductase] + H2O + H(+). The catalysed reaction is (5S)-hydroperoxy-(6E,8Z,11Z,14Z)-eicosatetraenoate = 5-oxo-(6E,8Z,11Z,14Z)-eicosatetraenoate + H2O. It carries out the reaction (12S)-hydroperoxy-(5Z,8Z,10E,14Z)-eicosatetraenoate = 12-oxo-(5Z,8Z,10E,14Z)-eicosatetraenoate + H2O. It catalyses the reaction (15S)-hydroperoxy-(5Z,8Z,11Z,13E)-eicosatetraenoate = 15-oxo-(5Z,8Z,11Z,13E)-eicosatetraenoate + H2O. The enzyme catalyses (13S)-hydroperoxy-(9Z,11E)-octadecadienoate = 13-oxo-(9Z,11E)-octadecadienoate + H2O. The catalysed reaction is (5Z,8Z,11Z,14Z)-eicosatetraenoate + reduced [NADPH--hemoprotein reductase] + O2 = 13-hydroxy-(5Z,8Z,11Z,14Z)-eicosatetraenoate + oxidized [NADPH--hemoprotein reductase] + H2O + H(+). It carries out the reaction (5Z,8Z,11Z,14Z)-eicosatetraenoate + reduced [NADPH--hemoprotein reductase] + O2 = 19-hydroxy-(5Z,8Z,11Z,14Z)-eicosatetraenoate + oxidized [NADPH--hemoprotein reductase] + H2O + H(+). It catalyses the reaction (9Z,12Z)-octadecadienoate + reduced [NADPH--hemoprotein reductase] + O2 = 11-hydroxy-(9Z,12Z)-octadecadienoate + oxidized [NADPH--hemoprotein reductase] + H2O + H(+). The protein operates within cofactor metabolism; retinol metabolism. It functions in the pathway steroid metabolism; cholesterol metabolism. It participates in lipid metabolism; arachidonate metabolism. Functionally, a cytochrome P450 monooxygenase involved in the metabolism of various endogenous substrates, including fatty acids, steroid hormones and vitamins. Mechanistically, uses molecular oxygen inserting one oxygen atom into a substrate, and reducing the second into a water molecule, with two electrons provided by NADPH via cytochrome P450 reductase (NADPH--hemoprotein reductase). Catalyzes the hydroxylation of carbon-hydrogen bonds. Exhibits high catalytic activity for the formation of hydroxyestrogens from estrone (E1) and 17beta-estradiol (E2), namely 2-hydroxy E1 and E2. Metabolizes cholesterol toward 25-hydroxycholesterol, a physiological regulator of cellular cholesterol homeostasis. May act as a major enzyme for all-trans retinoic acid biosynthesis in the liver. Catalyzes two successive oxidative transformation of all-trans retinol to all-trans retinal and then to the active form all-trans retinoic acid. Primarily catalyzes stereoselective epoxidation of the last double bond of polyunsaturated fatty acids (PUFA), displaying a strong preference for the (R,S) stereoisomer. Catalyzes bisallylic hydroxylation and omega-1 hydroxylation of PUFA. May also participate in eicosanoids metabolism by converting hydroperoxide species into oxo metabolites (lipoxygenase-like reaction, NADPH-independent). Plays a role in the oxidative metabolism of xenobiotics. Catalyzes the N-hydroxylation of heterocyclic amines and the O-deethylation of phenacetin. Metabolizes caffeine via N3-demethylation. The chain is Cytochrome P450 1A2 (CYP1A2) from Balaenoptera acutorostrata (Common minke whale).